We begin with the raw amino-acid sequence, 139 residues long: Putative pre-16S rRNA nuclease (139 aa).

Belongs to the YqgF nuclease family.

The protein resides in the cytoplasm. Could be a nuclease involved in processing of the 5'-end of pre-16S rRNA. The polypeptide is Putative pre-16S rRNA nuclease (Proteus mirabilis (strain HI4320)).